Reading from the N-terminus, the 521-residue chain is Zinc finger protein GLIS2 (521 aa).

Positions 35-174 are interaction with CTNND1; that stretch reads ALHRELGLVD…AKQLVCRWAK (140 aa). Disordered stretches follow at residues 41–63 and 84–110; these read GLVD…LLNP and SPPS…DLPP. Residues 49-58 are compositionally biased toward pro residues; that stretch reads PGSPGSPPPG. The transcription activation stretch occupies residues 71–137; sequence GRFSAAPLVD…SSFQFFLPLG (67 aa). The span at 84 to 100 shows a compositional bias: low complexity; the sequence is SPPSGLDSPNGSSSLSP. The interval 148 to 171 is transcription repression; sequence SFLPPPKDKCLSPELPLAKQLVCR. The C2H2-type 1 zinc finger occupies 168–193; sequence LVCRWAKCNQLFELLQDLVDHVNDHH. The C2H2-type 2; atypical zinc finger occupies 202-229; that stretch reads YCCHWEGCARHGRGFNARYKMLIHIRTH. 3 C2H2-type zinc fingers span residues 235–257, 263–287, and 293–317; these read HRCP…NRSH, YVCP…TRTH, and YYCK…IKAH. Residues 436–501 form a disordered region; that stretch reads AGSKAEGEKG…NSAASSPEVL (66 aa). Residues 455–470 are compositionally biased toward basic and acidic residues; sequence GLEDHKTPLERTERSR. Residues 487-496 are compositionally biased toward polar residues; sequence DLSTGNSAAS.

Belongs to the GLI C2H2-type zinc-finger protein family. In terms of assembly, interacts with CTBP1 and HDAC3. Interacts with CTNNB1 and CTNND1. Interacts with SUFU. Post-translationally, C-terminus cleavage is induced by interaction with CTNND1 and enhances by Src tyrosine kinase. In terms of tissue distribution, expressed at high levels in kidney, and at lower levels in heart and lung.

The protein localises to the nucleus speckle. It is found in the cytoplasm. Functionally, can act either as a transcriptional repressor or as a transcriptional activator, depending on the cell context. Acts as a repressor of the Hedgehog signaling pathway. Represses the Hedgehog-dependent expression of Wnt4. Necessary to maintain the differentiated epithelial phenotype in renal cells through the inhibition of SNAI1, which itself induces the epithelial-to-mesenchymal transition. Represses transcriptional activation by CTNNB1 in the Wnt signaling pathway. May act by recruiting the corepressors CTBP1 and HDAC3. May be involved in neuron differentiation. This is Zinc finger protein GLIS2 (Glis2) from Mus musculus (Mouse).